Reading from the N-terminus, the 108-residue chain is Putative membrane protein insertion efficiency factor (108 aa).

This sequence belongs to the UPF0161 family.

Its subcellular location is the cell inner membrane. Could be involved in insertion of integral membrane proteins into the membrane. In Chelativorans sp. (strain BNC1), this protein is Putative membrane protein insertion efficiency factor.